A 524-amino-acid chain; its full sequence is uncharacterized protein (524 aa).

The segment covering 83–101 (NSTPSKQAKPLQRNSPYQG) has biased composition (polar residues). 2 disordered regions span residues 83–108 (NSTP…SENQ) and 155–179 (PPCN…KRPR).

Its subcellular location is the cytoplasm. This is an uncharacterized protein from Saccharomyces cerevisiae (strain ATCC 204508 / S288c) (Baker's yeast).